The sequence spans 782 residues: DnaJ homolog subfamily C member 16 (782 aa).

The first 25 residues, 1–25 (MEVRKLSISWQFLIVLVLILQILSA), serve as a signal peptide directing secretion. Topologically, residues 26–535 (LDFDPYRVLG…DSIFHNNWRE (510 aa)) are cytoplasmic. The region spanning 29–93 (DPYRVLGVSR…EKRSNYDQYG (65 aa)) is the J domain. The Thioredoxin domain maps to 119-247 (FYFDESFFHF…LRQFVESLLP (129 aa)). The chain crosses the membrane as a helical; Anchor for type IV membrane protein span at residues 536-556 (MMPLLSLIFSALFILFGTVIV). At 557–782 (QAFSDSNDER…FYIPSWPELD (226 aa)) the chain is on the extracellular side. The disordered stretch occupies residues 562–593 (SNDERESSPPEKEEAQEKTGKTEPSFTKENSS). The segment covering 563–582 (NDERESSPPEKEEAQEKTGK) has biased composition (basic and acidic residues). A compositionally biased stretch (polar residues) spans 583–593 (TEPSFTKENSS). A glycan (N-linked (GlcNAc...) asparagine) is linked at N631.

The protein resides in the endoplasmic reticulum membrane. In terms of biological role, plays an important role in regulating the size of autophagosomes during the formation process. This Homo sapiens (Human) protein is DnaJ homolog subfamily C member 16 (DNAJC16).